Consider the following 315-residue polypeptide: Aspartate carbamoyltransferase catalytic subunit (315 aa).

Positions 64 and 65 each coordinate carbamoyl phosphate. Lysine 92 serves as a coordination point for L-aspartate. Residues arginine 114, histidine 142, and glutamine 145 each coordinate carbamoyl phosphate. L-aspartate-binding residues include arginine 176 and arginine 230. Residues glycine 271 and proline 272 each contribute to the carbamoyl phosphate site.

It belongs to the aspartate/ornithine carbamoyltransferase superfamily. ATCase family. As to quaternary structure, heterododecamer (2C3:3R2) of six catalytic PyrB chains organized as two trimers (C3), and six regulatory PyrI chains organized as three dimers (R2).

The catalysed reaction is carbamoyl phosphate + L-aspartate = N-carbamoyl-L-aspartate + phosphate + H(+). Its pathway is pyrimidine metabolism; UMP biosynthesis via de novo pathway; (S)-dihydroorotate from bicarbonate: step 2/3. Functionally, catalyzes the condensation of carbamoyl phosphate and aspartate to form carbamoyl aspartate and inorganic phosphate, the committed step in the de novo pyrimidine nucleotide biosynthesis pathway. The chain is Aspartate carbamoyltransferase catalytic subunit from Lawsonia intracellularis (strain PHE/MN1-00).